Reading from the N-terminus, the 242-residue chain is ATP synthase subunit a (242 aa).

A run of 5 helical transmembrane segments spans residues 21–41, 83–103, 118–137, 175–195, and 198–218; these read LASV…AIVC, AVTL…FAIV, ATVT…YYGI, LYGN…LFFE, and AWGW…SIFV.

The protein belongs to the ATPase A chain family. As to quaternary structure, F-type ATPases have 2 components, CF(1) - the catalytic core - and CF(0) - the membrane proton channel. CF(1) has five subunits: alpha(3), beta(3), gamma(1), delta(1), epsilon(1). CF(0) has three main subunits: a(1), b(2) and c(9-12). The alpha and beta chains form an alternating ring which encloses part of the gamma chain. CF(1) is attached to CF(0) by a central stalk formed by the gamma and epsilon chains, while a peripheral stalk is formed by the delta and b chains.

It localises to the cell membrane. Functionally, key component of the proton channel; it plays a direct role in the translocation of protons across the membrane. This is ATP synthase subunit a from Staphylococcus epidermidis (strain ATCC 35984 / DSM 28319 / BCRC 17069 / CCUG 31568 / BM 3577 / RP62A).